Reading from the N-terminus, the 457-residue chain is Bifunctional protein GlmU (457 aa).

The interval 1–236 is pyrophosphorylase; the sequence is MDQDACTHSA…DWHFLGVNTP (236 aa). Residues 14-17, Lys28, Gln79, and 84-85 contribute to the UDP-N-acetyl-alpha-D-glucosamine site; these read LAAG and GT. Asp110 contacts Mg(2+). UDP-N-acetyl-alpha-D-glucosamine-binding residues include Gly145, Glu159, Asn176, and Asn234. A Mg(2+)-binding site is contributed by Asn234. The tract at residues 237-257 is linker; that stretch reads KDLSYVESIQQAFIIEKLLQS. The tract at residues 258–457 is N-acetyltransferase; that stretch reads GVIIHSPESV…GKQKNFSKRK (200 aa). UDP-N-acetyl-alpha-D-glucosamine-binding residues include Arg340 and Lys358. Catalysis depends on His370, which acts as the Proton acceptor. Positions 373 and 384 each coordinate UDP-N-acetyl-alpha-D-glucosamine. Residues Ala387, 393–394, Ser412, Ala430, and Arg447 contribute to the acetyl-CoA site; that span reads NY.

This sequence in the N-terminal section; belongs to the N-acetylglucosamine-1-phosphate uridyltransferase family. In the C-terminal section; belongs to the transferase hexapeptide repeat family. As to quaternary structure, homotrimer. The cofactor is Mg(2+).

Its subcellular location is the cytoplasm. The enzyme catalyses alpha-D-glucosamine 1-phosphate + acetyl-CoA = N-acetyl-alpha-D-glucosamine 1-phosphate + CoA + H(+). The catalysed reaction is N-acetyl-alpha-D-glucosamine 1-phosphate + UTP + H(+) = UDP-N-acetyl-alpha-D-glucosamine + diphosphate. It participates in nucleotide-sugar biosynthesis; UDP-N-acetyl-alpha-D-glucosamine biosynthesis; N-acetyl-alpha-D-glucosamine 1-phosphate from alpha-D-glucosamine 6-phosphate (route II): step 2/2. Its pathway is nucleotide-sugar biosynthesis; UDP-N-acetyl-alpha-D-glucosamine biosynthesis; UDP-N-acetyl-alpha-D-glucosamine from N-acetyl-alpha-D-glucosamine 1-phosphate: step 1/1. It functions in the pathway bacterial outer membrane biogenesis; LPS lipid A biosynthesis. Its function is as follows. Catalyzes the last two sequential reactions in the de novo biosynthetic pathway for UDP-N-acetylglucosamine (UDP-GlcNAc). The C-terminal domain catalyzes the transfer of acetyl group from acetyl coenzyme A to glucosamine-1-phosphate (GlcN-1-P) to produce N-acetylglucosamine-1-phosphate (GlcNAc-1-P), which is converted into UDP-GlcNAc by the transfer of uridine 5-monophosphate (from uridine 5-triphosphate), a reaction catalyzed by the N-terminal domain. This chain is Bifunctional protein GlmU, found in Lawsonia intracellularis (strain PHE/MN1-00).